Consider the following 639-residue polypeptide: MPQPSVSGMDPPFGDAFRSHTFSEQTLMSTDLLANSSDPDFMYELDREMNYQQNPRDNFLSLEDCKDIENLESFTDVLDNEGALTSNWEQWDTYCEDLTKYTKLTSCDIWGTKEVDYLGLDDFSSPYQDEEVISKTPTLAQLNSEDSQSVSDSLYYPDSLFSVKQNPLPSSFPGKKITSRAAAPVCSSKTLQAEVPLSDCVQKASKPTSSTQIMVKTNMYHNEKVNFHVECKDYVKKAKVKINPVQQSRPLLSQIHTDAAKENTCYCGAVAKRQEKKGMEPLQGHATPALPFKETQELLLSPLPQEGPGSLAAGESSSLSASTSVSDSSQKKEEHNYSLFVSDNLGEQPTKCSPEEDEEDEEDVDDEDHDEGFGSEHELSENEEEEEEEEDYEDDKDDDISDTFSEPGYENDSVEDLKEVTSISSRKRGKRRYFWEYSEQLTPSQQERMLRPSEWNRDTLPSNMYQKNGLHHGKYAVKKSRRTDVEDLTPNPKKLLQIGNELRKLNKVISDLTPVSELPLTARPRSRKEKNKLASRACRLKKKAQYEANKVKLWGLNTEYDNLLFVINSIKQEIVNRVQNPRDERGPNMGQKLEILIKDTLGLPVAGQTSEFVNQVLEKTAEGNPTGGLVGLRIPTSKV.

The interval 302–422 (PLPQEGPGSL…SVEDLKEVTS (121 aa)) is disordered. A compositionally biased stretch (low complexity) spans 310–328 (SLAAGESSSLSASTSVSDS). Polar residues predominate over residues 339–351 (LFVSDNLGEQPTK). Residues 355–370 (EEDEEDEEDVDDEDHD) show a composition bias toward acidic residues. Positions 371-380 (EGFGSEHELS) are enriched in basic and acidic residues. Acidic residues predominate over residues 381–401 (ENEEEEEEEEDYEDDKDDDIS). In terms of domain architecture, bZIP spans 521–584 (TARPRSRKEK…VNRVQNPRDE (64 aa)). Residues 523 to 532 (RPRSRKEKNK) are basic motif. Residues 533–540 (LASRACRL) are leucine-zipper.

This sequence belongs to the bZIP family. CREBRF subfamily. Interacts (via leucine-zipper domain) with CREB3 (via leucine-zipper domain); the interaction promotes CREB3 degradation. Post-translationally, probably degraded by the proteasome.

The protein localises to the nucleus. Acts as a negative regulator of the endoplasmic reticulum stress response or unfolded protein response (UPR). Represses the transcriptional activity of CREB3 during the UPR. Recruits CREB3 into nuclear foci. The polypeptide is CREB3 regulatory factor (CREBRF) (Homo sapiens (Human)).